The following is a 253-amino-acid chain: Ciliary microtubule associated protein 1B (253 aa).

Residues 182–207 (PGPCAYQVVSPGVYKSRAPQFTILAR) form an STPGR repeat.

This sequence belongs to the CIMAP family.

It localises to the cell projection. It is found in the cilium. The protein resides in the flagellum. This is Ciliary microtubule associated protein 1B from Homo sapiens (Human).